The sequence spans 379 residues: Queuine tRNA-ribosyltransferase (379 aa).

The active-site Proton acceptor is Asp-93. Residues 93–97 (DSGGF), Asp-147, Gln-191, and Gly-218 each bind substrate. The segment at 249-255 (GVGKPED) is RNA binding. Asp-268 acts as the Nucleophile in catalysis. The tract at residues 273–277 (TRNAR) is RNA binding; important for wobble base 34 recognition. Residues Cys-306, Cys-308, Cys-311, and His-337 each contribute to the Zn(2+) site.

It belongs to the queuine tRNA-ribosyltransferase family. In terms of assembly, homodimer. Within each dimer, one monomer is responsible for RNA recognition and catalysis, while the other monomer binds to the replacement base PreQ1. Requires Zn(2+) as cofactor.

It catalyses the reaction 7-aminomethyl-7-carbaguanine + guanosine(34) in tRNA = 7-aminomethyl-7-carbaguanosine(34) in tRNA + guanine. It functions in the pathway tRNA modification; tRNA-queuosine biosynthesis. Catalyzes the base-exchange of a guanine (G) residue with the queuine precursor 7-aminomethyl-7-deazaguanine (PreQ1) at position 34 (anticodon wobble position) in tRNAs with GU(N) anticodons (tRNA-Asp, -Asn, -His and -Tyr). Catalysis occurs through a double-displacement mechanism. The nucleophile active site attacks the C1' of nucleotide 34 to detach the guanine base from the RNA, forming a covalent enzyme-RNA intermediate. The proton acceptor active site deprotonates the incoming PreQ1, allowing a nucleophilic attack on the C1' of the ribose to form the product. After dissociation, two additional enzymatic reactions on the tRNA convert PreQ1 to queuine (Q), resulting in the hypermodified nucleoside queuosine (7-(((4,5-cis-dihydroxy-2-cyclopenten-1-yl)amino)methyl)-7-deazaguanosine). The polypeptide is Queuine tRNA-ribosyltransferase (Actinobacillus succinogenes (strain ATCC 55618 / DSM 22257 / CCUG 43843 / 130Z)).